Here is a 245-residue protein sequence, read N- to C-terminus: Adenosine 5'-phosphosulfate reductase (245 aa).

[4Fe-4S] cluster is bound by residues cysteine 124, cysteine 125, cysteine 205, and cysteine 208. Residue cysteine 231 is the Nucleophile; cysteine thiosulfonate intermediate of the active site.

Belongs to the PAPS reductase family. CysH subfamily. The cofactor is [4Fe-4S] cluster.

It is found in the cytoplasm. It carries out the reaction [thioredoxin]-disulfide + sulfite + AMP + 2 H(+) = adenosine 5'-phosphosulfate + [thioredoxin]-dithiol. The protein operates within sulfur metabolism; hydrogen sulfide biosynthesis; sulfite from sulfate. In terms of biological role, catalyzes the formation of sulfite from adenosine 5'-phosphosulfate (APS) using thioredoxin as an electron donor. In Chelativorans sp. (strain BNC1), this protein is Adenosine 5'-phosphosulfate reductase.